The sequence spans 120 residues: Glycine cleavage system H protein (120 aa).

In terms of domain architecture, Lipoyl-binding spans 17-99 (VATVGITAHA…QGGGWLYRLK (83 aa)). Lysine 58 carries the N6-lipoyllysine modification.

It belongs to the GcvH family. As to quaternary structure, the glycine cleavage system is composed of four proteins: P, T, L and H. The cofactor is (R)-lipoate.

Its function is as follows. The glycine cleavage system catalyzes the degradation of glycine. The H protein shuttles the methylamine group of glycine from the P protein to the T protein. The polypeptide is Glycine cleavage system H protein (Methylorubrum extorquens (strain CM4 / NCIMB 13688) (Methylobacterium extorquens)).